The following is a 118-amino-acid chain: DNA-binding protein MmarC5_1518 (118 aa).

Basic and acidic residues predominate over residues 1–12 (MNPEEIRQRRLQ). Residues 1-35 (MNPEEIRQRRLQEMQAKAQEQGAEDPEAQRQAQEQ) form a disordered region.

Belongs to the PDCD5 family.

In Methanococcus maripaludis (strain C5 / ATCC BAA-1333), this protein is DNA-binding protein MmarC5_1518.